A 1251-amino-acid chain; its full sequence is ATP-dependent helicase/nuclease subunit A (1251 aa).

The UvrD-like helicase ATP-binding domain occupies 5–481 (TKWTDEQWEA…IILSRNFRSR (477 aa)). Residue 26-33 (AAAGAGKT) coordinates ATP. In terms of domain architecture, UvrD-like helicase C-terminal spans 526–824 (TVGGEVEFHL…RIMSIHKSKG (299 aa)). Residues 544–565 (NFTFENEGEEGRQADEGEEDEE) form a disordered region.

This sequence belongs to the helicase family. AddA subfamily. As to quaternary structure, heterodimer of AddA and AddB/RexB. It depends on Mg(2+) as a cofactor.

It carries out the reaction Couples ATP hydrolysis with the unwinding of duplex DNA by translocating in the 3'-5' direction.. It catalyses the reaction ATP + H2O = ADP + phosphate + H(+). The heterodimer acts as both an ATP-dependent DNA helicase and an ATP-dependent, dual-direction single-stranded exonuclease. Recognizes the chi site generating a DNA molecule suitable for the initiation of homologous recombination. The AddA nuclease domain is required for chi fragment generation; this subunit has the helicase and 3' -&gt; 5' nuclease activities. The protein is ATP-dependent helicase/nuclease subunit A of Acetivibrio thermocellus (strain ATCC 27405 / DSM 1237 / JCM 9322 / NBRC 103400 / NCIMB 10682 / NRRL B-4536 / VPI 7372) (Clostridium thermocellum).